Reading from the N-terminus, the 849-residue chain is SMY2 homolog 2 (849 aa).

A GYF domain is found at 149–205 (ESQWKYIDSNGNIQGPFGTNNMSQWYQGGYFTPTLQICRLATSPEPFGVNDRFIRLG). 4 disordered regions span residues 305-505 (APLS…TTNL), 527-547 (DLKK…QLDR), 593-612 (TKIN…IKPD), and 634-661 (NRAS…NTSN). The span at 308–318 (STTSSRSNKTT) shows a compositional bias: low complexity. Over residues 319–331 (SSHEEKVPSHEEA) the composition is skewed to basic and acidic residues. Threonine 350 is subject to Phosphothreonine. Composition is skewed to basic and acidic residues over residues 361–375 (TKQE…KEQN), 387–403 (VDRK…KSKD), and 425–443 (LLEE…EEQR). Positions 410 to 484 (EEQKRFAKAE…EKQKELLNNI (75 aa)) form a coiled coil. Basic residues predominate over residues 444 to 455 (KLKKEKKLKQKQ). Positions 456 to 479 (KKEEEKLKKKKKEEGKLEKEKQKE) are enriched in basic and acidic residues. Over residues 483-505 (NILTGDTETPSSENTATSITTNL) the composition is skewed to polar residues. The span at 594–605 (KINSQSKINKAN) shows a compositional bias: polar residues. A compositionally biased stretch (low complexity) spans 644 to 661 (SRTPSPSSSALNSSNTSN).

The protein belongs to the SMY2/mpd2 family. Interacts with ribosomes. Interacts with EAP1 and MSL5 (via the GYP domain).

It localises to the cytoplasm. The chain is SMY2 homolog 2 (SYH1) from Saccharomyces cerevisiae (strain ATCC 204508 / S288c) (Baker's yeast).